We begin with the raw amino-acid sequence, 102 residues long: Monothiol glutaredoxin-S8 (102 aa).

A Glutaredoxin domain is found at 1-101; it reads MEKIQKMISE…PMLKRFGALW (101 aa). C21 lines the [2Fe-2S] cluster pocket. A Responsive for interaction with TGA factors motif is present at residues 99 to 102; the sequence is ALWL.

The protein belongs to the glutaredoxin family. CC-type subfamily.

It is found in the cytoplasm. Its subcellular location is the nucleus. May only reduce GSH-thiol disulfides, but not protein disulfides. The sequence is that of Monothiol glutaredoxin-S8 (GRXS8) from Arabidopsis thaliana (Mouse-ear cress).